The sequence spans 582 residues: MRPRIRDVSDKLRPNRASFDDGETKFHRKHLPPLRTMFGRWRKWTVLVAAIWIQASTGTNFDFSAYSSHLKSVLGISQVRLNYLAVASDLGKAFGWSSGIALGYFPLSVVLFAAAAMGFVGYGVQWLVITNIITLPYSLVFLCCLLAGLSICWFNTACFILCIRHFPNNRALALSLTVSFNGISAALYSLAFNAINPSSSNLYLLLNSLVPLVVSFAALYPVLTKPSLDTTPDYDSRRHDSHVFTILNVLAVITSFHLLLSSSSTSSARLNFIGAVVLLVFPLCAPLLVYARDYFLPVINARLNHESSGYVMLNIDELKNQKTSVSSKTGYEHMGTAKEGNTVRLGDEHSFRLLISRLEFWLYYIAYFCGGTIGLVYSNNLGQIAQSLGQNSTTLVTIYSSFSFFGRLLSAAPDFMHKRFRLTRTGWFAIALLPTPIAFFLLAVSSSQQTALQTATALIGLSSGFIFAAAVSITSDLFGPNSVGVNHNILITNIPIGSLLYGYIAASIYEANASPDITPIVSDSIVCIGRDCYFKTFVFWGCLSILGVVSSLSLYIRTKPVYHRLEQDKVSLTSSYKDLDPL.

The tract at residues 1 to 20 (MRPRIRDVSDKLRPNRASFD) is disordered. Helical transmembrane passes span 46-66 (VLVAAIWIQASTGTNFDFSAY), 100-120 (IALGYFPLSVVLFAAAAMGFV), 132-152 (IITLPYSLVFLCCLLAGLSIC), 172-192 (LALSLTVSFNGISAALYSLAF), 202-222 (LYLLLNSLVPLVVSFAALYPV), 243-263 (VFTILNVLAVITSFHLLLSSS), 270-290 (LNFIGAVVLLVFPLCAPLLVY), and 358-378 (LEFWLYYIAYFCGGTIGLVYS). A glycan (N-linked (GlcNAc...) asparagine) is linked at asparagine 391. The next 5 membrane-spanning stretches (helical) occupy residues 395–412 (LVTIYSSFSFFGRLLSAA), 425–445 (TGWFAIALLPTPIAFFLLAVS), 458–478 (LIGLSSGFIFAAAVSITSDLF), 489–509 (ILITNIPIGSLLYGYIAASIY), and 536–556 (TFVFWGCLSILGVVSSLSLYI).

The protein localises to the membrane. Functionally, required for karyogamy during female gametophyte development, when the two polar nuclei fuse to form the diploid central cell nucleus. In Arabidopsis thaliana (Mouse-ear cress), this protein is Protein NUCLEAR FUSION DEFECTIVE 4.